The following is a 1583-amino-acid chain: Dynamin-binding protein (1583 aa).

Met1 bears the N-acetylmethionine mark. 4 SH3 domains span residues 2–61, 66–126, 145–204, and 243–302; these read EAGS…IVTI, EGER…ELCL, YSMG…LLGP, and QPGT…LFSK. 3 disordered regions span residues 217-244, 306-329, and 366-464; these read HNDC…EEQP, EETM…DCRE, and ECEV…RGMY. Positions 224-243 are enriched in acidic residues; sequence GEEETPTGEEERGPEEDEEQ. The span at 366 to 379 shows a compositional bias: basic and acidic residues; it reads ECEVHKSSHQDEGT. Polar residues predominate over residues 406–442; that stretch reads ETINGVSSQSQVPFRPRWQQNQYYSTTGRGHLSTEQY. A Phosphoserine modification is found at Ser495. Disordered regions lie at residues 594 to 656 and 671 to 693; these read RGSS…PSAQ and LFTH…QTLD. Pro residues predominate over residues 637-653; it reads PEPPLAMRPSRPAPLPP. The segment covering 675 to 685 has biased composition (basic and acidic residues); sequence ESCESPEKEGP. Positions 742–762 form a coiled coil; that stretch reads LEFYESNIESLNMELQQLREM. Residues 791–974 enclose the DH domain; sequence KRAKVIEELL…KEINVNINEY (184 aa). In terms of domain architecture, BAR spans 1015 to 1224; the sequence is LKHLTGFAPQ…LKVAGREGNL (210 aa). An SH3 5 domain is found at 1292 to 1355; that stretch reads PPEKLFQAER…YSSFLKPYNT (64 aa). The tract at residues 1357–1496 is disordered; it reads RSHSDVSVGS…GRNGQGKDLT (140 aa). Positions 1361-1387 are enriched in low complexity; it reads DVSVGSHSSTESEQSSSSPRFPRQNSS. The segment covering 1388–1414 has biased composition (polar residues); sequence GTLTFNPGSMAVSFTSGSCQKQPQDAT. Residues 1433–1456 show a composition bias toward low complexity; the sequence is SESSPSRCPSDPDSSPQPRSWDSP. In terms of domain architecture, SH3 6 spans 1519–1582; that stretch reads EGNQVYFAVY…PSNYIRKAEY (64 aa).

As to quaternary structure, binds DNM1 via its N-terminal SH3 domains. The C-terminal SH3 domain binds a complex containing actin, tubulin, Hsp70 and actin-regulatory proteins, such as ENAH, EVL, WIRE, CR16, WAVE1 and NAP1L1. Interacts with FASLG. Interacts (via SH3 domain 6) with WASL. Interacts (via SH3 domain 6) interacts with ENAH. Interacts (via C-terminal domain) with TJP1; required for the apical cell-cell junction localization of DNMBP.

The protein localises to the cytoplasm. The protein resides in the golgi apparatus. Its subcellular location is the golgi stack. It localises to the cytoskeleton. It is found in the synapse. The protein localises to the cell junction. In terms of biological role, plays a critical role as a guanine nucleotide exchange factor (GEF) for CDC42 in several intracellular processes associated with the actin and microtubule cytoskeleton. Regulates the structure of apical junctions in epithelial cells. Participates in the normal lumenogenesis of epithelial cell cysts by regulating spindle orientation. Plays a key role in ciliogenesis and cyst formation. May play a role in membrane trafficking between the cell surface and the Golgi. In Canis lupus familiaris (Dog), this protein is Dynamin-binding protein.